The chain runs to 344 residues: Selenide, water dikinase (344 aa).

C16 is a catalytic residue. Residues K19 and S47–D49 contribute to the ATP site. D50 contacts Mg(2+). ATP contacts are provided by residues D67, D90, and G138–S140. A Mg(2+)-binding site is contributed by D90. D226 contacts Mg(2+).

The protein belongs to the selenophosphate synthase 1 family. Class I subfamily. As to quaternary structure, homodimer. It depends on Mg(2+) as a cofactor.

The enzyme catalyses hydrogenselenide + ATP + H2O = selenophosphate + AMP + phosphate + 2 H(+). In terms of biological role, synthesizes selenophosphate from selenide and ATP. The protein is Selenide, water dikinase of Pseudomonas aeruginosa (strain ATCC 15692 / DSM 22644 / CIP 104116 / JCM 14847 / LMG 12228 / 1C / PRS 101 / PAO1).